Here is a 549-residue protein sequence, read N- to C-terminus: Glucose-6-phosphate isomerase (549 aa).

E354 serves as the catalytic Proton donor. Catalysis depends on residues H385 and K513.

This sequence belongs to the GPI family.

The protein resides in the cytoplasm. The catalysed reaction is alpha-D-glucose 6-phosphate = beta-D-fructose 6-phosphate. Its pathway is carbohydrate biosynthesis; gluconeogenesis. The protein operates within carbohydrate degradation; glycolysis; D-glyceraldehyde 3-phosphate and glycerone phosphate from D-glucose: step 2/4. Its function is as follows. Catalyzes the reversible isomerization of glucose-6-phosphate to fructose-6-phosphate. In Nitrosococcus oceani (strain ATCC 19707 / BCRC 17464 / JCM 30415 / NCIMB 11848 / C-107), this protein is Glucose-6-phosphate isomerase.